The primary structure comprises 650 residues: Probable protein phosphatase 2C 36 (650 aa).

Positions Ser-146–Lys-166 are disordered. The segment covering Lys-148–Lys-166 has biased composition (basic residues). Positions Glu-239–Leu-641 constitute a PPM-type phosphatase domain. Mn(2+)-binding residues include Asp-276, Gly-277, Asp-569, and Asp-632.

This sequence belongs to the PP2C family. Requires Mg(2+) as cofactor. It depends on Mn(2+) as a cofactor.

The protein localises to the nucleus. It catalyses the reaction O-phospho-L-seryl-[protein] + H2O = L-seryl-[protein] + phosphate. The enzyme catalyses O-phospho-L-threonyl-[protein] + H2O = L-threonyl-[protein] + phosphate. The polypeptide is Probable protein phosphatase 2C 36 (PLL3) (Arabidopsis thaliana (Mouse-ear cress)).